Consider the following 196-residue polypeptide: Small ribosomal subunit protein uS4m (196 aa).

One can recognise an S4 RNA-binding domain in the interval 88 to 154 (KRLDVILVRL…FKSNIRKNFQ (67 aa)).

The protein belongs to the universal ribosomal protein uS4 family.

Its subcellular location is the mitochondrion. This Marchantia polymorpha (Common liverwort) protein is Small ribosomal subunit protein uS4m (RPS4).